We begin with the raw amino-acid sequence, 577 residues long: Pentatricopeptide repeat-containing protein At1g06143 (577 aa).

12 PPR repeats span residues 59–89 (DCRL…MQEP), 90–124 (NVFV…SVSP), 125–155 (SSYT…KFGF), 158–192 (HVKI…DDIA), 193–219 (WTTM…MSEK), 220–250 (NEAT…MPVK), 251–285 (DIIS…GIIP), 286–320 (DEVT…GFVL), 321–351 (DVYI…LPKK), 352–386 (NLFC…SVKP), 387–417 (NAVT…MIDD), and 423–453 (NVEH…MEFE). Positions 458 to 534 (IWGALLDGCR…CPGTSSIRID (77 aa)) are type E motif. Positions 535–565 (KRDHLFAAADKSHSASDEVCLLLDEIYDQMG) are type E(+) motif.

The protein belongs to the PPR family. PCMP-E subfamily.

In Arabidopsis thaliana (Mouse-ear cress), this protein is Pentatricopeptide repeat-containing protein At1g06143 (EMB1444).